The following is a 383-amino-acid chain: Putative [LysW]-aminoadipate semialdehyde/glutamate semialdehyde transaminase (383 aa).

Residues 97–98 (GT) and Phe124 contribute to the pyridoxal 5'-phosphate site. Residue Arg127 coordinates substrate. 209 to 212 (DEVQ) contributes to the pyridoxal 5'-phosphate binding site. Lys238 is subject to N6-(pyridoxal phosphate)lysine. Position 266 (Ser266) interacts with substrate. Thr267 provides a ligand contact to pyridoxal 5'-phosphate.

The protein belongs to the class-III pyridoxal-phosphate-dependent aminotransferase family. LysJ subfamily. As to quaternary structure, homodimer. Pyridoxal 5'-phosphate serves as cofactor.

It localises to the cytoplasm. The catalysed reaction is [amino-group carrier protein]-C-terminal-gamma-(L-lysyl)-L-glutamate + 2-oxoglutarate = [amino-group carrier protein]-C-terminal-N-(1-carboxy-5-oxopentan-1-yl)-L-glutamine + L-glutamate. It carries out the reaction [amino-group carrier protein]-C-terminal-gamma-(L-ornithyl)-L-glutamate + 2-oxoglutarate = [amino-group carrier protein]-C-terminal-gamma-(L-glutamyl-5-semialdehyde)-L-glutamate + L-glutamate. It participates in amino-acid biosynthesis; L-lysine biosynthesis via AAA pathway; L-lysine from L-alpha-aminoadipate (Thermus route): step 4/5. The protein operates within amino-acid biosynthesis; L-arginine biosynthesis. Functionally, involved in both the arginine and lysine biosynthetic pathways. The polypeptide is Putative [LysW]-aminoadipate semialdehyde/glutamate semialdehyde transaminase (Pyrobaculum aerophilum (strain ATCC 51768 / DSM 7523 / JCM 9630 / CIP 104966 / NBRC 100827 / IM2)).